A 61-amino-acid chain; its full sequence is UPF0434 protein PFL_1779 (61 aa).

This sequence belongs to the UPF0434 family.

The sequence is that of UPF0434 protein PFL_1779 from Pseudomonas fluorescens (strain ATCC BAA-477 / NRRL B-23932 / Pf-5).